The chain runs to 474 residues: uncharacterized protein (474 aa).

A compositionally biased stretch (acidic residues) spans 1 to 11; it reads MGGSDFEDDEL. A disordered region spans residues 1–163; the sequence is MGGSDFEDDE…ETSPFNREDG (163 aa). The segment covering 12 to 25 has biased composition (basic and acidic residues); the sequence is FKDLYGEENEKKVE. A compositionally biased stretch (polar residues) spans 27 to 39; that stretch reads ASGNQETSNVTPT. The span at 40–76 shows a compositional bias: basic and acidic residues; sequence KENEGYEELEKSGEAGAERTKENPFREEPGADFDRSG. Residues 129–140 are compositionally biased toward polar residues; it reads NDNYNENQSALT. RRM domains follow at residues 163 to 245 and 247 to 324; these read GKMF…EQEK and AKMF…RATP. The interval 412-474 is disordered; the sequence is DPSKMNQGTG…GGHSFHPYRR (63 aa). The segment covering 425–434 has biased composition (low complexity); sequence PFSPSMPSGS. Positions 435–444 are enriched in gly residues; that stretch reads SRGGYHGRNP.

Its subcellular location is the nucleus. This is an uncharacterized protein from Schizosaccharomyces pombe (strain 972 / ATCC 24843) (Fission yeast).